The sequence spans 98 residues: uncharacterized protein (98 aa).

2 consecutive transmembrane segments (helical) span residues 8-28 (LILK…HYFL) and 73-93 (LWFI…SISL).

It localises to the membrane. This is an uncharacterized protein from Saccharomyces cerevisiae (strain ATCC 204508 / S288c) (Baker's yeast).